Consider the following 969-residue polypeptide: Defective in germ line development protein 3 (969 aa).

A gld-2-binding region spans residues 34 to 81 (MAENAASARKLFVSSALKDIIVNPENFYHDFQQSAQMAEDANQRRQVS). KH domains are found at residues 34–109 (MAEN…MIEI), 113–187 (RVTL…MRRN), 189–259 (HFTV…NEIL), 270–342 (FTLH…IMDL), and 344–419 (PISM…YQKV). A gls-1-binding region spans residues 57–471 (PENFYHDFQQ…GSNGRRHRSS (415 aa)). Disordered stretches follow at residues 459–508 (LSDG…SFSE) and 602–711 (EQHR…GDIH). Polar residues predominate over residues 487-508 (KQFSESSGGPSRSHTRVSSFSE). Residues 631 to 644 (PSSSTGSYYPSTTP) show a composition bias toward low complexity. Over residues 647-659 (RVYEQVREDDLRS) the composition is skewed to basic and acidic residues. Over residues 664–676 (RRTSVNGDDQNVE) the composition is skewed to polar residues. Basic and acidic residues-rich tracts occupy residues 677-687 (SMHDQGYERQY) and 694-711 (LQKD…GDIH). The gls-1-binding stretch occupies residues 769 to 969 (LYMHESPHND…DLSLDETSTY (201 aa)). The interval 860-949 (NGVTKTILEP…VLNEKEKEIA (90 aa)) is fbf-1-binding. The interval 950–969 (DKSIESTVTQDLSLDETSTY) is disordered. Positions 954–969 (ESTVTQDLSLDETSTY) are enriched in polar residues.

In terms of assembly, interacts (via its KH1 domain) with gld-2. Isoform A but not isoform B interacts specifically with fbf-1 and fbf-2 in an RNA-independent manner. Isoform A interacts with gls-1 isoform C. As to expression, expressed in the germline (at protein level). In adult hermaphrodites, first detected in the transition zone (TZ), weakly expressed in the early mitotic region and in pachytene germ cells, and becomes more abundantly expressed as germ cells enter diakinesis (at protein level). Expressed in primary spermatocytes, but not in secondary spermatocytes or adult sperm (at protein level).

Its subcellular location is the cytoplasm. It is found in the cytoplasmic granule. The protein localises to the perinuclear region. In terms of biological role, required maternally for germline survival and embryogenesis. Forms a complex with gls-1 which promotes the oogenic cell fate by freeing the translational repressor fbf to repress sperm promoting factors. Promotes maturation of primary spermatocytes to mature sperm. Required during hermaphrodite development to promote sperm fate, which is critical for determining the normal number of sperm. Promotion of sperm fate is at the expense of oogenesis, possibly through the negative regulation of fbf. Required during male development for the continued production of sperm and inhibition of oogenesis. Together with gld-2, promotes the transition from mitosis to meiosis. Required for polyadenylation of neg-1 mRNA during embryogenesis. The chain is Defective in germ line development protein 3 from Caenorhabditis elegans.